A 61-amino-acid polypeptide reads, in one-letter code: uncharacterized protein (61 aa).

This is an uncharacterized protein from Rickettsia conorii (strain ATCC VR-613 / Malish 7).